The following is a 574-amino-acid chain: Efflux pump FUB11 (574 aa).

A disordered region spans residues 1–44; sequence MAIDPQPSSPSLSSETIANDTIGNDNNVNEPSVEPKTQEHQHTV. Polar residues predominate over residues 9–30; it reads SPSLSSETIANDTIGNDNNVNE. The N-linked (GlcNAc...) asparagine glycan is linked to asparagine 19. Transmembrane regions (helical) follow at residues 116-136, 148-168, 176-196, 208-228, 235-255, 318-338, 348-368, 394-414, 419-439, 449-469, and 484-504; these read VATLGISLYVLGFTFGPLIWA, FFFTFMVATAFSAGAAGAGSI, FLTGSIGSAPLSNAPALIADM, MFSGAPFLGPAIGPIAGGFLG, WLHGLMAAFTGVTWIACTVFI, IYISIIYGTMYMCFAAFPIVF, IGGLAFTGIVIGVILSIISFA, AIMGSLLIPIGLFWFAWTTFA, IVPIIGTVFFAWGLVLVFMAL, IFAASIMAANSALRSLFGAAF, and WASSIPAFLALACVPFPFLFY. Residues 552-574 are disordered; it reads HNSHTSATHSHGHRRSLSCTRSV.

It belongs to the major facilitator superfamily. DHA1 family. Polyamines/proton antiporter (TC 2.A.1.2.16) subfamily.

It localises to the cell membrane. Its function is as follows. Efflux pump involved in export of fusaric acid, a mycotoxin with low to moderate toxicity to animals and humans, but with high phytotoxic properties. Constitutes a self-protecting mechanism of the fungus against critical levels of fusaric acid within the cell. This is Efflux pump FUB11 from Gibberella fujikuroi (strain CBS 195.34 / IMI 58289 / NRRL A-6831) (Bakanae and foot rot disease fungus).